The following is a 284-amino-acid chain: D-tagatose-1,6-bisphosphate aldolase subunit GatY (284 aa).

Aspartate 82 acts as the Proton donor in catalysis. Residues histidine 83 and histidine 180 each contribute to the Zn(2+) site. Glycine 181 lines the dihydroxyacetone phosphate pocket. Histidine 208 serves as a coordination point for Zn(2+). Dihydroxyacetone phosphate-binding positions include 209–211 (GAS) and 230–233 (NVAT).

Belongs to the class II fructose-bisphosphate aldolase family. TagBP aldolase GatY subfamily. As to quaternary structure, forms a complex with GatZ. Zn(2+) is required as a cofactor.

The enzyme catalyses D-tagatofuranose 1,6-bisphosphate = D-glyceraldehyde 3-phosphate + dihydroxyacetone phosphate. It functions in the pathway carbohydrate metabolism; D-tagatose 6-phosphate degradation; D-glyceraldehyde 3-phosphate and glycerone phosphate from D-tagatose 6-phosphate: step 2/2. Catalytic subunit of the tagatose-1,6-bisphosphate aldolase GatYZ, which catalyzes the reversible aldol condensation of dihydroxyacetone phosphate (DHAP or glycerone-phosphate) with glyceraldehyde 3-phosphate (G3P) to produce tagatose 1,6-bisphosphate (TBP). Requires GatZ subunit for full activity and stability. Is involved in the catabolism of galactitol. This chain is D-tagatose-1,6-bisphosphate aldolase subunit GatY, found in Salmonella enteritidis PT4 (strain P125109).